A 461-amino-acid polypeptide reads, in one-letter code: Ufm1-specific protease 2 (461 aa).

Active-site residues include cysteine 294, aspartate 418, and histidine 420.

The protein belongs to the peptidase C78 family. In terms of tissue distribution, expressed at high level in brain, kidney, stomach, skeletal muscle, liver, pancreas, spleen and testis.

The protein resides in the endoplasmic reticulum. Its subcellular location is the cytoplasm. The protein localises to the nucleus. Thiol-dependent isopeptidase that specifically cleaves UFM1, a ubiquitin-like modifier protein, from conjugated proteins, such as CD274/PD-L1, CYB5R3, DDRGK1, MRE11, RPL26/uL24, TRIP4 and RPL26/uL24. While it is also able to mediate the processing of UFM1 precursors, a prerequisite for conjugation reactions, UFSP2 mainly acts as a protein deUFMylase that mediates deconjugation of UFM1 from target proteins. Mediates deUFMylation of RPL26/uL24, a critical step to release the UFM1 ribosome E3 ligase (UREL) complex during the recycling of 60S ribosome subunits from the endoplasmic reticulum. Catalyzes deUFMylation of TRIP4, regulating intracellular nuclear receptors transactivation and thereby regulate cell proliferation and differentiation. The polypeptide is Ufm1-specific protease 2 (Mus musculus (Mouse)).